The chain runs to 532 residues: MFRFREIEKTLCMDRTRDCAVRFHVYLQSLDLGSSDPLSPDFDGLAYLRDECLTKHPSLGDSNSDARRKELAYAKLMDSDQRCKIQNSNGYDYSHIESGVLSGILKTAQALVANLLTGFESHFLNDCSFSNGASQGFKLRDAAPFKKIAGQATVTAPAYDIAVAAVKTCAPWYAYMQETYGDETKWFRRVYGNGLFSVPKNNKIDRAACKEPDMNMYLQKGAGSFIRKRLRSVGIDLNDQTRNQELARLGSIDGSLATIDLSSASDSISDRLVWDLLPPHVYSYLARIRTSFTMIDGRLHKWGLFSTMGNGFTFELESMIFWALSKSIMLSMGVTGSLGIYGDDIIVPVECRPTLLKVLSAVNFLPNEEKTFTTGYFRESCGAHFFKDADMKPFYCKRPMETLPDVMLLCNRIRGWQTVGGMSDPRLFPIWKEFADMIPPKFKGGCNLDRDTYLVSPDKPGVSLVRIAKVRSGFNHAFPYGHENGRYVHWLHMGSGEVLETISSARYRCKPNSEWRTQIPLFPQELEACVLS.

In terms of domain architecture, RdRp catalytic spans 245-375; it reads ELARLGSIDG…PNEEKTFTTG (131 aa).

In terms of assembly, part of the viral RNA-dependent RNA polymerase complex, the other subunits are probably the host ribosomal protein S1, EF-Tu and EF-Ts.

The enzyme catalyses RNA(n) + a ribonucleoside 5'-triphosphate = RNA(n+1) + diphosphate. Functionally, this is the catalytic subunit of the viral RNA-dependent RNA polymerase complex. This complex is involved in viral RNA replication that produces (+)-stranded genomes via a complementary, (-)-stranded intermediate. The protein is RNA-directed RNA polymerase beta chain of Escherichia coli (Bacteriophage GA).